The sequence spans 426 residues: D-tagatose-1,6-bisphosphate aldolase subunit KbaZ (426 aa).

This sequence belongs to the GatZ/KbaZ family. KbaZ subfamily. Forms a complex with KbaY.

The protein operates within carbohydrate metabolism; D-tagatose 6-phosphate degradation; D-glyceraldehyde 3-phosphate and glycerone phosphate from D-tagatose 6-phosphate: step 2/2. Its function is as follows. Component of the tagatose-1,6-bisphosphate aldolase KbaYZ that is required for full activity and stability of the Y subunit. Could have a chaperone-like function for the proper and stable folding of KbaY. When expressed alone, KbaZ does not show any aldolase activity. The chain is D-tagatose-1,6-bisphosphate aldolase subunit KbaZ from Escherichia coli (strain SMS-3-5 / SECEC).